The chain runs to 612 residues: Threonine--tRNA ligase (612 aa).

The segment at aspartate 218–proline 509 is catalytic. The Zn(2+) site is built by cysteine 310, histidine 361, and histidine 486.

Belongs to the class-II aminoacyl-tRNA synthetase family. Homodimer. Requires Zn(2+) as cofactor.

The protein localises to the cytoplasm. It carries out the reaction tRNA(Thr) + L-threonine + ATP = L-threonyl-tRNA(Thr) + AMP + diphosphate + H(+). Catalyzes the attachment of threonine to tRNA(Thr) in a two-step reaction: L-threonine is first activated by ATP to form Thr-AMP and then transferred to the acceptor end of tRNA(Thr). Also edits incorrectly charged L-seryl-tRNA(Thr). The protein is Threonine--tRNA ligase of Helicobacter pylori (strain G27).